The following is a 333-amino-acid chain: Endo-1,4-beta-xylanase (333 aa).

An N-terminal signal peptide occupies residues 1 to 17 (MYLVAFMLLAILPTGYC). One can recognise a GH10 domain in the interval 18–330 (QLNTLAVRAG…KPAYQGIVDG (313 aa)). Glutamate 147 acts as the Proton donor in catalysis. Glutamate 252 functions as the Nucleophile in the catalytic mechanism.

Belongs to the glycosyl hydrolase 10 (cellulase F) family.

It localises to the secreted. The enzyme catalyses Endohydrolysis of (1-&gt;4)-beta-D-xylosidic linkages in xylans.. The protein operates within glycan degradation; xylan degradation. Has xylanase activity. Seems to be involved in the release of sugars from the hemicellulolytic fraction in the compost. The polypeptide is Endo-1,4-beta-xylanase (xlnA) (Agaricus bisporus (White button mushroom)).